A 66-amino-acid chain; its full sequence is Large ribosomal subunit protein bL33c (66 aa).

Belongs to the bacterial ribosomal protein bL33 family.

Its subcellular location is the plastid. The protein localises to the chloroplast. This chain is Large ribosomal subunit protein bL33c, found in Oryza nivara (Indian wild rice).